A 330-amino-acid chain; its full sequence is L-lactate dehydrogenase (330 aa).

Residues V31, D52, K57, and G96 to A97 contribute to the NAD(+) site. Residues Q99, R105, and N137–D140 contribute to the substrate site. Residues V135–N137 and S160 contribute to the NAD(+) site. D165–R168 is a binding site for substrate. Positions 170 and 185 each coordinate beta-D-fructose 1,6-bisphosphate. H192 functions as the Proton acceptor in the catalytic mechanism. Phosphotyrosine is present on Y238. Position 247 (T247) interacts with substrate.

This sequence belongs to the LDH/MDH superfamily. LDH family. Homotetramer.

The protein resides in the cytoplasm. It carries out the reaction (S)-lactate + NAD(+) = pyruvate + NADH + H(+). The protein operates within fermentation; pyruvate fermentation to lactate; (S)-lactate from pyruvate: step 1/1. Its activity is regulated as follows. Allosterically activated by fructose 1,6-bisphosphate (FBP). In terms of biological role, catalyzes the conversion of lactate to pyruvate. The sequence is that of L-lactate dehydrogenase from Gloeobacter violaceus (strain ATCC 29082 / PCC 7421).